We begin with the raw amino-acid sequence, 325 residues long: 1-aminocyclopropane-1-carboxylate oxidase 2 (325 aa).

In terms of domain architecture, Fe2OG dioxygenase spans 157–257 (PTFGTKVSNY…RMSIASFYNP (101 aa)). Fe cation-binding residues include His181, Asp183, and His238.

This sequence belongs to the iron/ascorbate-dependent oxidoreductase family. Fe cation serves as cofactor.

The catalysed reaction is 1-aminocyclopropane-1-carboxylate + L-ascorbate + O2 = ethene + L-dehydroascorbate + hydrogen cyanide + CO2 + 2 H2O. The protein operates within alkene biosynthesis; ethylene biosynthesis via S-adenosyl-L-methionine; ethylene from S-adenosyl-L-methionine: step 2/2. This chain is 1-aminocyclopropane-1-carboxylate oxidase 2 (ACO2), found in Doritaenopsis sp. (Moth orchid).